Consider the following 459-residue polypeptide: Argininosuccinate lyase (459 aa).

It belongs to the lyase 1 family. Argininosuccinate lyase subfamily.

It localises to the cytoplasm. The catalysed reaction is 2-(N(omega)-L-arginino)succinate = fumarate + L-arginine. Its pathway is amino-acid biosynthesis; L-arginine biosynthesis; L-arginine from L-ornithine and carbamoyl phosphate: step 3/3. This is Argininosuccinate lyase from Geobacillus thermodenitrificans (strain NG80-2).